The primary structure comprises 448 residues: tRNA modification GTPase MnmE (448 aa).

(6S)-5-formyl-5,6,7,8-tetrahydrofolate is bound by residues arginine 24, glutamate 81, and lysine 120. Positions 216 to 373 (GLNVVLVGAP…LKRTLLREAG (158 aa)) constitute a TrmE-type G domain. Asparagine 226 is a binding site for K(+). Residues 226–231 (NVGKSS), 245–251 (TDIAGTT), and 270–273 (DTAG) contribute to the GTP site. Serine 230 lines the Mg(2+) pocket. The K(+) site is built by threonine 245, isoleucine 247, and threonine 250. Threonine 251 contributes to the Mg(2+) binding site. Lysine 448 provides a ligand contact to (6S)-5-formyl-5,6,7,8-tetrahydrofolate.

It belongs to the TRAFAC class TrmE-Era-EngA-EngB-Septin-like GTPase superfamily. TrmE GTPase family. In terms of assembly, homodimer. Heterotetramer of two MnmE and two MnmG subunits. The cofactor is K(+).

It is found in the cytoplasm. In terms of biological role, exhibits a very high intrinsic GTPase hydrolysis rate. Involved in the addition of a carboxymethylaminomethyl (cmnm) group at the wobble position (U34) of certain tRNAs, forming tRNA-cmnm(5)s(2)U34. The chain is tRNA modification GTPase MnmE from Neisseria meningitidis serogroup C (strain 053442).